The sequence spans 362 residues: Probable S-adenosylmethionine-dependent methyltransferase At5g37970 (362 aa).

Residues Tyr19, Cys66, Asn71, Asp107, Ser136, and Phe137 each coordinate S-adenosyl-L-homocysteine. Mg(2+)-binding residues include Asn175, Glu261, and Phe263.

This sequence belongs to the methyltransferase superfamily. Type-7 methyltransferase family. As to quaternary structure, homodimer. It depends on Mg(2+) as a cofactor.

This is Probable S-adenosylmethionine-dependent methyltransferase At5g37970 from Arabidopsis thaliana (Mouse-ear cress).